Here is a 221-residue protein sequence, read N- to C-terminus: Thiopurine S-methyltransferase (221 aa).

Residues Trp12, Leu47, Glu68, and Arg125 each contribute to the S-adenosyl-L-methionine site.

This sequence belongs to the class I-like SAM-binding methyltransferase superfamily. TPMT family.

The protein resides in the cytoplasm. The enzyme catalyses S-adenosyl-L-methionine + a thiopurine = S-adenosyl-L-homocysteine + a thiopurine S-methylether.. This chain is Thiopurine S-methyltransferase, found in Legionella pneumophila (strain Paris).